A 288-amino-acid chain; its full sequence is Elongation factor Ts (288 aa).

Residues 79–82 are involved in Mg(2+) ion dislocation from EF-Tu; it reads TDFV.

This sequence belongs to the EF-Ts family.

Its subcellular location is the cytoplasm. In terms of biological role, associates with the EF-Tu.GDP complex and induces the exchange of GDP to GTP. It remains bound to the aminoacyl-tRNA.EF-Tu.GTP complex up to the GTP hydrolysis stage on the ribosome. The polypeptide is Elongation factor Ts (Ehrlichia ruminantium (strain Welgevonden)).